A 330-amino-acid chain; its full sequence is Induced myeloid leukemia cell differentiation protein Mcl-1 homolog (330 aa).

The segment at 85 to 155 (LAVPPEEMAA…PPEEEDDELY (71 aa)) is PEST-like. S101 is modified (phosphoserine). K116 is covalently cross-linked (Glycyl lysine isopeptide (Lys-Gly) (interchain with G-Cter in ubiquitin)). A disordered region spans residues 129 to 153 (EAAKSSGADGSLPSTPPPPEEEDDE). S139 carries the post-translational modification Phosphoserine; by GSK3-alpha and GSK3-beta. S142 carries the phosphoserine modification. A Phosphothreonine; by MAPK modification is found at T143. Glycyl lysine isopeptide (Lys-Gly) (interchain with G-Cter in ubiquitin) cross-links involve residues K174 and K177. Positions 189–203 (ALETLRRVGDGVQRN) match the BH3 motif. Positions 232 to 252 (HVFKDGVTNWGRIVTLISFGA) match the BH1 motif. The BH2 motif lies at 284–299 (DWLVKQRGWDGFVEFF). A helical membrane pass occupies residues 307 to 329 (GIRNVLLAFAGVAGVGAGLAYLI).

This sequence belongs to the Bcl-2 family. As to quaternary structure, interacts with HIF3A (via C-terminus domain). Interacts with BOK, BIK, BAX, BAK1, and TPT1. Interacts with unphosphorylated BAD. Interacts with BMF, BBC3 and PMAIP1. Interacts with BOP. Interacts with BCL2L11; may sequester BCL2L11 to prevent its pro-apoptotic activity. Interacts with GIMAP5 and HSPA8/HSC70; the interaction between HSPA8 and MCL1 is impaired in the absence of GIMAP5. In terms of processing, cleaved by CASP3 during apoptosis, yielding a pro-apoptotic C-terminal fragment. Rapidly degraded in the absence of phosphorylation in the PEST region. Post-translationally, phosphorylated on Ser-139, by GSK3, in response to IL3/interleukin-3 withdrawal. Phosphorylation at Ser-139 induces ubiquitination and proteasomal degradation, abrogating the anti-apoptotic activity. Treatment with taxol or okadaic acid induces phosphorylation on additional sites. In terms of processing, ubiquitinated. Ubiquitination is induced by phosphorylation at Ser-139. Deubiquitinated by USP20; leading to increased stability. Ubiquitous. Highly expressed in heart, spleen, lung, liver, skeletal muscle and kidney. Detected at lower levels in brain, ovary, oviduct and testis.

It localises to the membrane. It is found in the cytoplasm. The protein resides in the mitochondrion. Its subcellular location is the nucleus. The protein localises to the nucleoplasm. Functionally, involved in the regulation of apoptosis versus cell survival, and in the maintenance of viability but not of proliferation. Mediates its effects by interactions with a number of other regulators of apoptosis. In Rattus norvegicus (Rat), this protein is Induced myeloid leukemia cell differentiation protein Mcl-1 homolog (Mcl1).